The sequence spans 48 residues: Delta-stichotoxin-Hcr1b (48 aa).

3 cysteine pairs are disulfide-bonded: C3/C43, C5/C33, and C26/C44.

The protein belongs to the sea anemone sodium channel inhibitory toxin family. Type II subfamily.

Its subcellular location is the secreted. It localises to the nematocyst. Its function is as follows. Binds to site 3 of voltage-gated sodium channels and inhibits the inactivation process. In Radianthus crispa (Leathery sea anemone), this protein is Delta-stichotoxin-Hcr1b.